Here is a 79-residue protein sequence, read N- to C-terminus: D-alanyl carrier protein (79 aa).

Residues Met-1 to Met-77 enclose the Carrier domain. Position 35 is an O-(pantetheine 4'-phosphoryl)serine (Ser-35).

It belongs to the DltC family. 4'-phosphopantetheine is transferred from CoA to a specific serine of apo-DCP.

Its subcellular location is the cytoplasm. It participates in cell wall biogenesis; lipoteichoic acid biosynthesis. Functionally, carrier protein involved in the D-alanylation of lipoteichoic acid (LTA). The loading of thioester-linked D-alanine onto DltC is catalyzed by D-alanine--D-alanyl carrier protein ligase DltA. The DltC-carried D-alanyl group is further transferred to cell membrane phosphatidylglycerol (PG) by forming an ester bond, probably catalyzed by DltD. D-alanylation of LTA plays an important role in modulating the properties of the cell wall in Gram-positive bacteria, influencing the net charge of the cell wall. This is D-alanyl carrier protein from Streptococcus suis (strain 98HAH33).